The primary structure comprises 352 residues: DNA polymerase IV (352 aa).

The UmuC domain occupies 4-185 (IIHVDMDCFF…LPLSKIPGVG (182 aa)). Residues Asp-8 and Asp-103 each contribute to the Mg(2+) site. Residue Glu-104 is part of the active site.

Belongs to the DNA polymerase type-Y family. As to quaternary structure, monomer. Requires Mg(2+) as cofactor.

It localises to the cytoplasm. The catalysed reaction is DNA(n) + a 2'-deoxyribonucleoside 5'-triphosphate = DNA(n+1) + diphosphate. Its function is as follows. Poorly processive, error-prone DNA polymerase involved in untargeted mutagenesis. Copies undamaged DNA at stalled replication forks, which arise in vivo from mismatched or misaligned primer ends. These misaligned primers can be extended by PolIV. Exhibits no 3'-5' exonuclease (proofreading) activity. May be involved in translesional synthesis, in conjunction with the beta clamp from PolIII. This is DNA polymerase IV from Yersinia pseudotuberculosis serotype O:1b (strain IP 31758).